The chain runs to 288 residues: Sulfur carrier protein FdhD (288 aa).

Residue cysteine 122 is the Cysteine persulfide intermediate of the active site. Residue 268–273 coordinates Mo-bis(molybdopterin guanine dinucleotide); that stretch reads FVRGER.

This sequence belongs to the FdhD family.

The protein localises to the cytoplasm. Functionally, required for formate dehydrogenase (FDH) activity. Acts as a sulfur carrier protein that transfers sulfur from IscS to the molybdenum cofactor prior to its insertion into FDH. The polypeptide is Sulfur carrier protein FdhD (Anaeromyxobacter sp. (strain K)).